We begin with the raw amino-acid sequence, 61 residues long: MDTKLLDILACPITKGPLKLSADKTELISKGAGLAYPIRDGIPVMLESEARTLTDEERLDK.

This sequence belongs to the UPF0434 family.

This is UPF0434 protein PSEEN1604 from Pseudomonas entomophila (strain L48).